Reading from the N-terminus, the 924-residue chain is Lipoxygenase 7, chloroplastic (924 aa).

The N-terminal 61 residues, 1-61, are a transit peptide targeting the chloroplast; sequence MLRPQLNPSS…GQGSSRVVVV (61 aa). The region spanning 88–218 is the PLAT domain; that stretch reads AVATIKVTVG…VGDEGTPSKR (131 aa). A Lipoxygenase domain is found at 225-924; it reads TYLPGQTPAG…GMGIPNSTSI (700 aa). The interval 231-315 is disordered; sequence TPAGLRSYRK…PKSETRKGNV (85 aa). 2 stretches are compositionally biased toward basic and acidic residues: residues 239 to 262 and 302 to 315; these read RKND…RVYD and SKKD…KGNV. The Fe cation site is built by His581, His586, His773, Asn777, and Ile924.

This sequence belongs to the lipoxygenase family. It depends on Fe cation as a cofactor.

It localises to the plastid. The protein resides in the chloroplast. It catalyses the reaction (9Z,12Z)-octadecadienoate + O2 = (13S)-hydroperoxy-(9Z,11E)-octadecadienoate. The catalysed reaction is (9Z,12Z,15Z)-octadecatrienoate + O2 = (13S)-hydroperoxy-(9Z,11E,15Z)-octadecatrienoate. It functions in the pathway lipid metabolism; oxylipin biosynthesis. Its function is as follows. Plant lipoxygenase may be involved in a number of diverse aspects of plant physiology including growth and development, pest resistance, and senescence or responses to wounding. This lipoxygenase introduces molecular oxygen exclusively into the C-13 position of linoleic and linolenic acids. The protein is Lipoxygenase 7, chloroplastic (CM-LOX1) of Oryza sativa subsp. japonica (Rice).